A 231-amino-acid chain; its full sequence is Protein C activator (231 aa).

A Peptidase S1 domain is found at V1–S222. 6 disulfides stabilise this stretch: C7–C138, C25–C41, C73–C229, C117–C183, C149–C162, and C173–C198. N-linked (GlcNAc...) asparagine glycosylation is present at N21. The active-site Charge relay system is the H40. A glycan (N-linked (GlcNAc...) asparagine) is linked at N78. D85 acts as the Charge relay system in catalysis. N129 carries N-linked (GlcNAc...) asparagine glycosylation. S177 acts as the Charge relay system in catalysis.

This sequence belongs to the peptidase S1 family. Snake venom subfamily. As to quaternary structure, monomer. As to expression, expressed by the venom gland.

It is found in the secreted. In terms of biological role, snake venom serine protease that selectively cleaves the heavy chain of protein C (PROC). This activation is thrombomodulin-independent. In Agkistrodon contortrix contortrix (Southern copperhead), this protein is Protein C activator.